Reading from the N-terminus, the 843-residue chain is Protein P (843 aa).

Residues 1–177 (MPLSYQHFRK…FCGSPYSWEQ (177 aa)) form a terminal protein domain (TP) region. Residues 178-346 (ELQHGRLVFQ…YCLSHLINLH (169 aa)) are spacer. Disordered stretches follow at residues 218-243 (LKQS…SGSI) and 291-315 (TAQR…AGSQ). Positions 347-690 (EDWGPCIEHG…YLNLYPVARQ (344 aa)) are polymerase/reverse transcriptase domain (RT). A Reverse transcriptase domain is found at 357 to 600 (EHNIRIPRTP…YSLNFMGYVI (244 aa)). Mg(2+) contacts are provided by D429, D551, and D552.

This sequence belongs to the hepadnaviridae P protein family.

The enzyme catalyses DNA(n) + a 2'-deoxyribonucleoside 5'-triphosphate = DNA(n+1) + diphosphate. It carries out the reaction Endonucleolytic cleavage to 5'-phosphomonoester.. Activated by host HSP70 and HSP40 in vitro to be able to bind the epsilon loop of the pgRNA. Because deletion of the RNase H region renders the protein partly chaperone-independent, the chaperones may be needed indirectly to relieve occlusion of the RNA-binding site by this domain. Inhibited by several reverse-transcriptase inhibitors: Lamivudine, Adefovir and Entecavir. Functionally, multifunctional enzyme that converts the viral RNA genome into dsDNA in viral cytoplasmic capsids. This enzyme displays a DNA polymerase activity that can copy either DNA or RNA templates, and a ribonuclease H (RNase H) activity that cleaves the RNA strand of RNA-DNA heteroduplexes in a partially processive 3'- to 5'-endonucleasic mode. Neo-synthesized pregenomic RNA (pgRNA) are encapsidated together with the P protein, and reverse-transcribed inside the nucleocapsid. Initiation of reverse-transcription occurs first by binding the epsilon loop on the pgRNA genome, and is initiated by protein priming, thereby the 5'-end of (-)DNA is covalently linked to P protein. Partial (+)DNA is synthesized from the (-)DNA template and generates the relaxed circular DNA (RC-DNA) genome. After budding and infection, the RC-DNA migrates in the nucleus, and is converted into a plasmid-like covalently closed circular DNA (cccDNA). The activity of P protein does not seem to be necessary for cccDNA generation, and is presumably released from (+)DNA by host nuclear DNA repair machinery. The polypeptide is Protein P (Hepatitis B virus genotype C subtype ayw (isolate Australia/AustRC/1992) (HBV-C)).